The sequence spans 1020 residues: RNA-binding protein 44 (1020 aa).

2 disordered regions span residues 1 to 23 (MQATAVVETDSDKSYHKNGGHLQ) and 50 to 70 (DGEGDSLTTDERTNVKENSSV). Positions 58 to 70 (TDERTNVKENSSV) are enriched in basic and acidic residues. Residues Ser249, Ser371, Ser374, Ser516, Ser683, and Ser690 each carry the phosphoserine modification. The region spanning 796 to 870 (FLIHVGGLCP…KSVNVRLVKI (75 aa)) is the RRM domain.

Homodimer. Interacts with TEX14.

The protein localises to the cytoplasm. Functionally, component of intercellular bridges during meiosis. Intercellular bridges are evolutionarily conserved structures that connect differentiating germ cells. Not required for fertility. In Rattus norvegicus (Rat), this protein is RNA-binding protein 44 (Rbm44).